The sequence spans 279 residues: Biotin synthase (279 aa).

The Radical SAM core domain maps to 1-228 (MKDIFLCSIC…SARLMIAGGR (228 aa)). [4Fe-4S] cluster is bound by residues C17, C21, and C24. Residues C61, C96, C154, and R221 each contribute to the [2Fe-2S] cluster site.

This sequence belongs to the radical SAM superfamily. Biotin synthase family. In terms of assembly, homodimer. [4Fe-4S] cluster is required as a cofactor. Requires [2Fe-2S] cluster as cofactor.

The enzyme catalyses (4R,5S)-dethiobiotin + (sulfur carrier)-SH + 2 reduced [2Fe-2S]-[ferredoxin] + 2 S-adenosyl-L-methionine = (sulfur carrier)-H + biotin + 2 5'-deoxyadenosine + 2 L-methionine + 2 oxidized [2Fe-2S]-[ferredoxin]. The protein operates within cofactor biosynthesis; biotin biosynthesis; biotin from 7,8-diaminononanoate: step 2/2. Functionally, catalyzes the conversion of dethiobiotin (DTB) to biotin by the insertion of a sulfur atom into dethiobiotin via a radical-based mechanism. The chain is Biotin synthase from Wolinella succinogenes (strain ATCC 29543 / DSM 1740 / CCUG 13145 / JCM 31913 / LMG 7466 / NCTC 11488 / FDC 602W) (Vibrio succinogenes).